Here is a 1099-residue protein sequence, read N- to C-terminus: Carbamoyl phosphate synthase large chain (1099 aa).

A carboxyphosphate synthetic domain region spans residues 1-402 (MPRREDIKRI…ALGKALRSLE (402 aa)). Positions 129, 169, 175, 176, 208, 210, 215, 241, 242, 243, 285, and 299 each coordinate ATP. The region spanning 133–328 (KKTMEEAGLE…IAKIAALLAV (196 aa)) is the ATP-grasp 1 domain. The Mg(2+) site is built by Q285, E299, and N301. Q285, E299, and N301 together coordinate Mn(2+). An oligomerization domain region spans residues 403–541 (LDAAPKLDLD…STYNGVENEA (139 aa)). Positions 542 to 944 (IPTDKEKIMI…AFAKAEIAAG (403 aa)) are carbamoyl phosphate synthetic domain. Residues 666 to 857 (AKLLKRIGLR…VAKIAAKIMV (192 aa)) enclose the ATP-grasp 2 domain. The ATP site is built by R702, K741, L743, E748, G773, V774, H775, S776, Q816, and E828. Mg(2+) is bound by residues Q816, E828, and N830. Positions 816, 828, and 830 each coordinate Mn(2+). The 155-residue stretch at 945–1099 (NPLPTEGAIL…VRKLTDTWKM (155 aa)) folds into the MGS-like domain. Residues 945–1099 (NPLPTEGAIL…VRKLTDTWKM (155 aa)) are allosteric domain.

This sequence belongs to the CarB family. Composed of two chains; the small (or glutamine) chain promotes the hydrolysis of glutamine to ammonia, which is used by the large (or ammonia) chain to synthesize carbamoyl phosphate. Tetramer of heterodimers (alpha,beta)4. Mg(2+) is required as a cofactor. The cofactor is Mn(2+).

The enzyme catalyses hydrogencarbonate + L-glutamine + 2 ATP + H2O = carbamoyl phosphate + L-glutamate + 2 ADP + phosphate + 2 H(+). It catalyses the reaction hydrogencarbonate + NH4(+) + 2 ATP = carbamoyl phosphate + 2 ADP + phosphate + 2 H(+). It participates in amino-acid biosynthesis; L-arginine biosynthesis; carbamoyl phosphate from bicarbonate: step 1/1. It functions in the pathway pyrimidine metabolism; UMP biosynthesis via de novo pathway; (S)-dihydroorotate from bicarbonate: step 1/3. Large subunit of the glutamine-dependent carbamoyl phosphate synthetase (CPSase). CPSase catalyzes the formation of carbamoyl phosphate from the ammonia moiety of glutamine, carbonate, and phosphate donated by ATP, constituting the first step of 2 biosynthetic pathways, one leading to arginine and/or urea and the other to pyrimidine nucleotides. The large subunit (synthetase) binds the substrates ammonia (free or transferred from glutamine from the small subunit), hydrogencarbonate and ATP and carries out an ATP-coupled ligase reaction, activating hydrogencarbonate by forming carboxy phosphate which reacts with ammonia to form carbamoyl phosphate. The chain is Carbamoyl phosphate synthase large chain from Thermotoga neapolitana (strain ATCC 49049 / DSM 4359 / NBRC 107923 / NS-E).